A 324-amino-acid chain; its full sequence is Beta-ketoacyl-[acyl-carrier-protein] synthase III (324 aa).

Catalysis depends on residues C112 and H249. The segment at 250–254 is ACP-binding; that stretch reads QANRR. N279 is a catalytic residue.

The protein belongs to the thiolase-like superfamily. FabH family. In terms of assembly, homodimer.

The protein localises to the cytoplasm. It catalyses the reaction malonyl-[ACP] + acetyl-CoA + H(+) = 3-oxobutanoyl-[ACP] + CO2 + CoA. It participates in lipid metabolism; fatty acid biosynthesis. Its function is as follows. Catalyzes the condensation reaction of fatty acid synthesis by the addition to an acyl acceptor of two carbons from malonyl-ACP. Catalyzes the first condensation reaction which initiates fatty acid synthesis and may therefore play a role in governing the total rate of fatty acid production. Possesses both acetoacetyl-ACP synthase and acetyl transacylase activities. Its substrate specificity determines the biosynthesis of branched-chain and/or straight-chain of fatty acids. The chain is Beta-ketoacyl-[acyl-carrier-protein] synthase III from Streptococcus equi subsp. equi (strain 4047).